A 115-amino-acid chain; its full sequence is Large ribosomal subunit protein bL19 (115 aa).

Belongs to the bacterial ribosomal protein bL19 family.

Its function is as follows. This protein is located at the 30S-50S ribosomal subunit interface and may play a role in the structure and function of the aminoacyl-tRNA binding site. This Francisella tularensis subsp. tularensis (strain WY96-3418) protein is Large ribosomal subunit protein bL19.